Consider the following 320-residue polypeptide: Ferrochelatase (320 aa).

Residues His-194 and Glu-275 each contribute to the Fe cation site.

Belongs to the ferrochelatase family.

It localises to the cytoplasm. It carries out the reaction heme b + 2 H(+) = protoporphyrin IX + Fe(2+). It functions in the pathway porphyrin-containing compound metabolism; protoheme biosynthesis; protoheme from protoporphyrin-IX: step 1/1. Catalyzes the ferrous insertion into protoporphyrin IX. The polypeptide is Ferrochelatase (Pectobacterium atrosepticum (strain SCRI 1043 / ATCC BAA-672) (Erwinia carotovora subsp. atroseptica)).